The sequence spans 419 residues: MRAEIIAVGTEILTGQIVNTNAQFLSEKMAELGIDIYFQTAVGDNEERLLSLLDIASQRSQLVILCGGLGPTEDDLTKQTLAKFLGKSLTVDLLASQKLDRFFASRPQFARTPNNERQAQLVEGSIPLQNLTGLAVGGIVTSKGVQYMVLPGPPSELNPMVMEQVVPILSNNGTKLYSRVLRFFGIGESQLVTILEDIIKNQTDPTIAPYAKVGEVTLRLSTKAENQDEADFKLDSLEKEILALKTLDNRKLKDLLYGYGDNNSMARTVLELLKVQNKTITAAESLTAGLFQSQLAEFSGASQVFNGGFTTYSMEAKSQLLGIPKKKLQEYGVISHFTAEAMAQQARQLLKADFGIGLTGVAGPDELEGYPAGTVFIGIATPEGVSSIKVSIGGKSRSDVRHISTLHAFDLVRRALLKI.

The protein belongs to the CinA family.

The polypeptide is Putative competence-damage inducible protein (Streptococcus agalactiae serotype Ia (strain ATCC 27591 / A909 / CDC SS700)).